Here is a 179-residue protein sequence, read N- to C-terminus: Adenine phosphoribosyltransferase (179 aa).

The protein belongs to the purine/pyrimidine phosphoribosyltransferase family. In terms of assembly, homodimer.

The protein localises to the cytoplasm. It carries out the reaction AMP + diphosphate = 5-phospho-alpha-D-ribose 1-diphosphate + adenine. It functions in the pathway purine metabolism; AMP biosynthesis via salvage pathway; AMP from adenine: step 1/1. Catalyzes a salvage reaction resulting in the formation of AMP, that is energically less costly than de novo synthesis. This is Adenine phosphoribosyltransferase from Methylacidiphilum infernorum (isolate V4) (Methylokorus infernorum (strain V4)).